An 84-amino-acid chain; its full sequence is Cell division topological specificity factor (84 aa).

It belongs to the MinE family.

In terms of biological role, prevents the cell division inhibition by proteins MinC and MinD at internal division sites while permitting inhibition at polar sites. This ensures cell division at the proper site by restricting the formation of a division septum at the midpoint of the long axis of the cell. The protein is Cell division topological specificity factor of Paraburkholderia phytofirmans (strain DSM 17436 / LMG 22146 / PsJN) (Burkholderia phytofirmans).